The primary structure comprises 274 residues: ATP synthase subunit delta (274 aa).

The protein belongs to the ATPase delta chain family. As to quaternary structure, F-type ATPases have 2 components, F(1) - the catalytic core - and F(0) - the membrane proton channel. F(1) has five subunits: alpha(3), beta(3), gamma(1), delta(1), epsilon(1). F(0) has three main subunits: a(1), b(2) and c(10-14). The alpha and beta chains form an alternating ring which encloses part of the gamma chain. F(1) is attached to F(0) by a central stalk formed by the gamma and epsilon chains, while a peripheral stalk is formed by the delta and b chains.

It localises to the cell membrane. In terms of biological role, f(1)F(0) ATP synthase produces ATP from ADP in the presence of a proton or sodium gradient. F-type ATPases consist of two structural domains, F(1) containing the extramembraneous catalytic core and F(0) containing the membrane proton channel, linked together by a central stalk and a peripheral stalk. During catalysis, ATP synthesis in the catalytic domain of F(1) is coupled via a rotary mechanism of the central stalk subunits to proton translocation. Functionally, this protein is part of the stalk that links CF(0) to CF(1). It either transmits conformational changes from CF(0) to CF(1) or is implicated in proton conduction. The sequence is that of ATP synthase subunit delta from Salinispora arenicola (strain CNS-205).